The primary structure comprises 540 residues: Signal peptide peptidase-like 2 (540 aa).

Positions 1–27 are cleaved as a signal peptide; it reads MDSLRFLRILLLSSSILLLSLRSTVTA. Over 28–196 the chain is Lumenal; that stretch reads GDIVHQDNLA…PRRPAVDVAE (169 aa). The N-linked (GlcNAc...) asparagine glycan is linked to N83. The region spanning 95 to 173 is the PA domain; that stretch reads SCTPLKNKLS…QDAGASLQKM (79 aa). An N-linked (GlcNAc...) asparagine glycan is attached at N176. A helical membrane pass occupies residues 197 to 217; sequence VFLWLMAIGTILCASYWSAWS. The Cytoplasmic segment spans residues 218-248; sequence AREAAIEHDKLLKDAIDEIPNTNDGGSGVVE. The chain crosses the membrane as a helical span at residues 249-269; sequence INSISAIFFVVLASGFLVILY. The Lumenal portion of the chain corresponds to 270-278; it reads KLMSYWFVE. The chain crosses the membrane as a helical span at residues 279–299; the sequence is LLVVVFCIGGVEGLQTCLVAL. The Cytoplasmic segment spans residues 300–319; sequence LSRWFQRAADTYVKVPFLGP. The chain crosses the membrane as a helical span at residues 320–340; it reads ISYLTLAVSPFCIVFAVLWAV. Topologically, residues 341–345 are lumenal; sequence YRVHS. A helical membrane pass occupies residues 346–366; that stretch reads FAWIGQDVLGIALIITVLQIV. The Cytoplasmic segment spans residues 367-370; it reads HVPN. A helical membrane pass occupies residues 371–391; the sequence is LKVGTVLLSCAFLYDIFWVFV. D385 is a catalytic residue. Residues 392–429 are Lumenal-facing; the sequence is SKKLFHESVMIVVARGDKSGEDGIPMLLKIPRMFDPWG. A helical membrane pass occupies residues 430-450; sequence GYSIIGFGDILLPGLLIAFAL. The active site involves D438. The Cytoplasmic segment spans residues 451–462; that stretch reads RYDWLANKTLRT. The helical transmembrane segment at 463 to 483 threads the bilayer; it reads GYFIWAMVAYGLGLLITYVAL. Residues 484-488 lie on the Lumenal side of the membrane; that stretch reads NLMDG. Residues 489–509 traverse the membrane as a helical segment; that stretch reads HGQPALLYIVPFTLGTMLTLA. The short motif at 492–494 is the PAL element; sequence PAL. The Cytoplasmic segment spans residues 510 to 540; sequence RKRDDLWILWTKGEPERACPHHVRLEQCSEK.

This sequence belongs to the peptidase A22B family. Post-translationally, glycosylated. Ubiquitous.

It is found in the endosome membrane. Intramembrane-cleaving aspartic protease (I-CLiP) that cleaves type II membrane signal peptides in the hydrophobic plane of the membrane. The protein is Signal peptide peptidase-like 2 (SPPL2) of Arabidopsis thaliana (Mouse-ear cress).